Here is a 104-residue protein sequence, read N- to C-terminus: MAAKIRRDDEVIVLAGKDKGKRGKVLSVVTESGRLFVEGINLIKKHQKPVPQLNQPGGIVEKEASIDVSNVAIYNSETSKADRVGFKIEDGKKLRIFKSTGKTI.

This sequence belongs to the universal ribosomal protein uL24 family. Part of the 50S ribosomal subunit.

In terms of biological role, one of two assembly initiator proteins, it binds directly to the 5'-end of the 23S rRNA, where it nucleates assembly of the 50S subunit. One of the proteins that surrounds the polypeptide exit tunnel on the outside of the subunit. This Pseudoalteromonas translucida (strain TAC 125) protein is Large ribosomal subunit protein uL24.